The primary structure comprises 149 residues: D-aminoacyl-tRNA deacylase (149 aa).

Positions 137 to 138 (GP) match the Gly-cisPro motif, important for rejection of L-amino acids motif.

The protein belongs to the DTD family. In terms of assembly, homodimer.

It localises to the cytoplasm. The enzyme catalyses glycyl-tRNA(Ala) + H2O = tRNA(Ala) + glycine + H(+). The catalysed reaction is a D-aminoacyl-tRNA + H2O = a tRNA + a D-alpha-amino acid + H(+). Its function is as follows. An aminoacyl-tRNA editing enzyme that deacylates mischarged D-aminoacyl-tRNAs. Also deacylates mischarged glycyl-tRNA(Ala), protecting cells against glycine mischarging by AlaRS. Acts via tRNA-based rather than protein-based catalysis; rejects L-amino acids rather than detecting D-amino acids in the active site. By recycling D-aminoacyl-tRNA to D-amino acids and free tRNA molecules, this enzyme counteracts the toxicity associated with the formation of D-aminoacyl-tRNA entities in vivo and helps enforce protein L-homochirality. This is D-aminoacyl-tRNA deacylase from Clostridium tetani (strain Massachusetts / E88).